A 269-amino-acid chain; its full sequence is dITP/XTP pyrophosphatase (269 aa).

22–27 (SNNAHK) lines the substrate pocket. Aspartate 82 functions as the Proton acceptor in the catalytic mechanism. Position 82 (aspartate 82) interacts with Mg(2+). Residues serine 83, 165-168 (FGYD), lysine 188, and 193-194 (HR) contribute to the substrate site.

It belongs to the HAM1 NTPase family. Homodimer. The cofactor is Mg(2+).

It carries out the reaction XTP + H2O = XMP + diphosphate + H(+). It catalyses the reaction dITP + H2O = dIMP + diphosphate + H(+). The enzyme catalyses ITP + H2O = IMP + diphosphate + H(+). Its function is as follows. Pyrophosphatase that catalyzes the hydrolysis of nucleoside triphosphates to their monophosphate derivatives, with a high preference for the non-canonical purine nucleotides XTP (xanthosine triphosphate), dITP (deoxyinosine triphosphate) and ITP. Seems to function as a house-cleaning enzyme that removes non-canonical purine nucleotides from the nucleotide pool, thus preventing their incorporation into DNA/RNA and avoiding chromosomal lesions. This chain is dITP/XTP pyrophosphatase, found in Treponema pallidum (strain Nichols).